Reading from the N-terminus, the 177-residue chain is Adenine phosphoribosyltransferase (177 aa).

It belongs to the purine/pyrimidine phosphoribosyltransferase family. In terms of assembly, homodimer.

The protein resides in the cytoplasm. It carries out the reaction AMP + diphosphate = 5-phospho-alpha-D-ribose 1-diphosphate + adenine. It participates in purine metabolism; AMP biosynthesis via salvage pathway; AMP from adenine: step 1/1. Functionally, catalyzes a salvage reaction resulting in the formation of AMP, that is energically less costly than de novo synthesis. This is Adenine phosphoribosyltransferase from Prosthecochloris aestuarii (strain DSM 271 / SK 413).